We begin with the raw amino-acid sequence, 90 residues long: Large ribosomal subunit protein bL27 (90 aa).

The segment at 1–22 is disordered; the sequence is MAHKKAGGSTRNGRDSNPKMLG.

This sequence belongs to the bacterial ribosomal protein bL27 family.

The sequence is that of Large ribosomal subunit protein bL27 from Coxiella burnetii (strain Dugway 5J108-111).